Reading from the N-terminus, the 595-residue chain is Protein LUTEIN DEFICIENT 5, chloroplastic (595 aa).

The transit peptide at Met-1 to Val-28 directs the protein to the chloroplast. Cys-516 is a heme binding site.

It belongs to the cytochrome P450 family. It depends on heme as a cofactor.

Its subcellular location is the plastid. It is found in the chloroplast. Its function is as follows. Heme-containing cytochrome P450 involved in the biosynthesis of xanthophylls. Specific for beta-ring hydroxylation of alpha- and beta-carotene. Also has a low activity toward the epsilon-rings of alpha-carotene. The beta-ring of alpha-carotene is the preferred substrate in planta. The sequence is that of Protein LUTEIN DEFICIENT 5, chloroplastic (CYP97A3) from Arabidopsis thaliana (Mouse-ear cress).